The following is a 311-amino-acid chain: Aspartate carbamoyltransferase catalytic subunit (311 aa).

Carbamoyl phosphate contacts are provided by Arg-58 and Thr-59. Lys-86 serves as a coordination point for L-aspartate. Residues Arg-108, His-136, and Gln-139 each coordinate carbamoyl phosphate. L-aspartate is bound by residues Arg-169 and Arg-223. Residues Gly-264 and Pro-265 each contribute to the carbamoyl phosphate site.

It belongs to the aspartate/ornithine carbamoyltransferase superfamily. ATCase family. Heterododecamer (2C3:3R2) of six catalytic PyrB chains organized as two trimers (C3), and six regulatory PyrI chains organized as three dimers (R2).

It catalyses the reaction carbamoyl phosphate + L-aspartate = N-carbamoyl-L-aspartate + phosphate + H(+). Its pathway is pyrimidine metabolism; UMP biosynthesis via de novo pathway; (S)-dihydroorotate from bicarbonate: step 2/3. Catalyzes the condensation of carbamoyl phosphate and aspartate to form carbamoyl aspartate and inorganic phosphate, the committed step in the de novo pyrimidine nucleotide biosynthesis pathway. The chain is Aspartate carbamoyltransferase catalytic subunit from Pelodictyon phaeoclathratiforme (strain DSM 5477 / BU-1).